A 473-amino-acid chain; its full sequence is Asparagine--tRNA ligase (473 aa).

Belongs to the class-II aminoacyl-tRNA synthetase family. Homodimer.

It localises to the cytoplasm. The catalysed reaction is tRNA(Asn) + L-asparagine + ATP = L-asparaginyl-tRNA(Asn) + AMP + diphosphate + H(+). In Treponema denticola (strain ATCC 35405 / DSM 14222 / CIP 103919 / JCM 8153 / KCTC 15104), this protein is Asparagine--tRNA ligase.